The chain runs to 181 residues: D-lyxose/D-mannose isomerase (181 aa).

Mn(2+) is bound by residues H75, H77, E88, and H143.

This sequence belongs to the D-lyxose ketol-isomerase family. In terms of assembly, homodimer. The cofactor is Mn(2+).

The enzyme catalyses D-lyxose = D-xylulose. The catalysed reaction is D-mannose = D-fructose. Functionally, sugar isomerase that catalyzes the reversible isomerization of D-lyxose to D-xylulose, and D-mannose to D-fructose. Shows optimum activity using D-lyxose as substrate, but can also effectively catalyze the isomerization between D-fructose and D-mannose. The chain is D-lyxose/D-mannose isomerase from Thermosediminibacter oceani (strain ATCC BAA-1034 / DSM 16646 / JW/IW-1228P).